The chain runs to 118 residues: Peptidyl-tRNA hydrolase (118 aa).

The protein belongs to the PTH2 family.

The protein localises to the cytoplasm. The catalysed reaction is an N-acyl-L-alpha-aminoacyl-tRNA + H2O = an N-acyl-L-amino acid + a tRNA + H(+). Its function is as follows. The natural substrate for this enzyme may be peptidyl-tRNAs which drop off the ribosome during protein synthesis. This is Peptidyl-tRNA hydrolase from Thermococcus onnurineus (strain NA1).